Reading from the N-terminus, the 491-residue chain is Beta-galactosidase (491 aa).

Glu-209 (proton donor) is an active-site residue. Glu-389 acts as the Nucleophile in catalysis.

This sequence belongs to the glycosyl hydrolase 1 family.

The enzyme catalyses Hydrolysis of terminal non-reducing beta-D-galactose residues in beta-D-galactosides.. In Sulfolobus acidocaldarius (strain ATCC 33909 / DSM 639 / JCM 8929 / NBRC 15157 / NCIMB 11770), this protein is Beta-galactosidase (bgaS).